Reading from the N-terminus, the 533-residue chain is D-3-phosphoglycerate dehydrogenase (533 aa).

The residue at position 2 (alanine 2) is an N-acetylalanine. At serine 14 the chain carries Phosphoserine. An N6-acetyllysine; alternate modification is found at lysine 21. Lysine 21 is covalently cross-linked (Glycyl lysine isopeptide (Lys-Gly) (interchain with G-Cter in SUMO1); alternate). A Glycyl lysine isopeptide (Lys-Gly) (interchain with G-Cter in SUMO2); alternate cross-link involves residue lysine 21. Lysine 58 carries the post-translational modification N6-acetyllysine. NAD(+) contacts are provided by residues threonine 78, 155 to 156 (RI), aspartate 175, threonine 207, 234 to 236 (CAR), and aspartate 260. Threonine 78 carries the phosphothreonine modification. Arginine 236 is an active-site residue. Glutamate 265 is an active-site residue. The active-site Proton donor is histidine 283. 283 to 286 (HLGA) lines the NAD(+) pocket.

It belongs to the D-isomer specific 2-hydroxyacid dehydrogenase family. Homotetramer.

It catalyses the reaction (2R)-3-phosphoglycerate + NAD(+) = 3-phosphooxypyruvate + NADH + H(+). The catalysed reaction is (R)-2-hydroxyglutarate + NAD(+) = 2-oxoglutarate + NADH + H(+). It carries out the reaction (S)-malate + NAD(+) = oxaloacetate + NADH + H(+). Its pathway is amino-acid biosynthesis; L-serine biosynthesis; L-serine from 3-phospho-D-glycerate: step 1/3. In terms of biological role, catalyzes the reversible oxidation of 3-phospho-D-glycerate to 3-phosphonooxypyruvate, the first step of the phosphorylated L-serine biosynthesis pathway. Also catalyzes the reversible oxidation of 2-hydroxyglutarate to 2-oxoglutarate and the reversible oxidation of (S)-malate to oxaloacetate. This chain is D-3-phosphoglycerate dehydrogenase (PHGDH), found in Pongo abelii (Sumatran orangutan).